The primary structure comprises 130 residues: Small ribosomal subunit protein uS9 (130 aa).

Belongs to the universal ribosomal protein uS9 family.

The protein is Small ribosomal subunit protein uS9 of Bordetella parapertussis (strain 12822 / ATCC BAA-587 / NCTC 13253).